A 547-amino-acid chain; its full sequence is NXPE family member 1 (547 aa).

Positions 1–21 (MSSNTMLQKTLLILISFSVVT) are cleaved as a signal peptide. N-linked (GlcNAc...) asparagine glycans are attached at residues asparagine 39 and asparagine 211.

This sequence belongs to the NXPE family.

The protein localises to the secreted. The chain is NXPE family member 1 (NXPE1) from Homo sapiens (Human).